An 880-amino-acid chain; its full sequence is Interference hedgehog (880 aa).

The signal sequence occupies residues 1–20; it reads MTLLTSSLLFFSLLTSRLEA. The Extracellular segment spans residues 21–703; that stretch reads IPVLEKSPAH…ETFNMSPMLT (683 aa). Ig-like C2-type domains follow at residues 45-142, 132-234, 252-340, and 346-432; these read PGVR…IARL, PLVV…IQLT, PHLL…YIKV, and PQIV…LQVN. Intrachain disulfides connect Cys-68–Cys-126, Cys-173–Cys-220, Cys-276–Cys-324, and Cys-367–Cys-414. 2 N-linked (GlcNAc...) asparagine glycosylation sites follow: Asn-102 and Asn-209. Residues 426–467 are disordered; sequence GTLLQVNPKQIQEPRESGGTHRPKPNQGSKQKQMYPPTPPNV. 2 Fibronectin type-III domains span residues 461–567 and 575–670; these read PPTP…LQPG and VPEL…TQRP. N-linked (GlcNAc...) asparagine glycosylation is present at Asn-466. Residues Arg-497, Lys-501, Lys-503, and Arg-541 each coordinate heparin. Asn-557 carries an N-linked (GlcNAc...) asparagine glycan. Residues 662-697 are disordered; it reads LKQGRTQRPKTSTTEEPTLQMGDRDTTTPSHNETFN. 2 stretches are compositionally biased toward polar residues: residues 665–678 and 688–697; these read GRTQ…TEEP and TTPSHNETFN. Asn-693 carries N-linked (GlcNAc...) asparagine glycosylation. Residues 704–724 traverse the membrane as a helical segment; sequence GTIGGGAVLILLLISTCLCVC. Over 725–880 the chain is Cytoplasmic; that stretch reads RRRSSRSRGN…SSGSLNSVGV (156 aa). Disordered regions lie at residues 728–762 and 775–880; these read SSRS…QRQR and QQQQ…SVGV. Composition is skewed to low complexity over residues 823–837 and 864–880; these read RAGG…NNNN and SSRS…SVGV.

It belongs to the immunoglobulin superfamily. IHOG family. In terms of assembly, homodimer. Heterotetramer; 2 iHog chains bind 2 hh chains when facilitated by heparin, heparin is required to promote high-affinity interactions between hh and iHog.

The protein localises to the membrane. Functionally, mediates response to the active Hedgehog (Hh) protein signal in embryos, functioning upstream or at the level of patched (ptc). The chain is Interference hedgehog from Drosophila yakuba (Fruit fly).